Consider the following 508-residue polypeptide: Cobalamin biosynthesis protein CobIJ (508 aa).

The precorrin-2 C20-methyltransferase stretch occupies residues 1–243 (MSARGTLWGV…AMLPGGRRRA (243 aa)). A precorrin-3 methylase region spans residues 244-508 (LLTGTVAVVG…TATKSSRHSD (265 aa)). Residues 489 to 508 (PRRYPEAGRATATKSSRHSD) are disordered.

Belongs to the precorrin methyltransferase family.

The enzyme catalyses precorrin-2 + S-adenosyl-L-methionine = precorrin-3A + S-adenosyl-L-homocysteine + H(+). It catalyses the reaction precorrin-3B + S-adenosyl-L-methionine = precorrin-4 + S-adenosyl-L-homocysteine + 3 H(+). The protein operates within cofactor biosynthesis; adenosylcobalamin biosynthesis; cob(II)yrinate a,c-diamide from precorrin-2 (aerobic route): step 1/10. It participates in cofactor biosynthesis; adenosylcobalamin biosynthesis; cob(II)yrinate a,c-diamide from precorrin-2 (aerobic route): step 3/10. Its function is as follows. Methylates precorrin-2 at the C-20 position to produce precorrin-3A. The protein is Cobalamin biosynthesis protein CobIJ (cobIJ) of Mycobacterium bovis (strain ATCC BAA-935 / AF2122/97).